Reading from the N-terminus, the 199-residue chain is Transgelin-2 (199 aa).

A2 bears the N-acetylalanine mark. S11 bears the Phosphoserine mark. N6-acetyllysine is present on residues K17 and K20. The region spanning 24 to 136 (ADLEQILIQW…RTLMNLGGLA (113 aa)) is the Calponin-homology (CH) domain. The residue at position 163 (S163) is a Phosphoserine. K171 is covalently cross-linked (Glycyl lysine isopeptide (Lys-Gly) (interchain with G-Cter in SUMO2)). One copy of the Calponin-like repeat lies at 174-199 (IGLQMGTNRGASQAGMTGYGMPRQIL). Residue T180 is modified to Phosphothreonine. Omega-N-methylarginine is present on residues R182 and R196.

It belongs to the calponin family.

This chain is Transgelin-2 (TAGLN2), found in Bos taurus (Bovine).